A 643-amino-acid chain; its full sequence is Alpha-dioxygenase PIOX (643 aa).

The active-site Proton acceptor is histidine 168. Ca(2+) is bound at residue aspartate 169. Histidine 173 serves as a coordination point for heme b. 4 residues coordinate Ca(2+): threonine 221, tryptophan 223, aspartate 225, and serine 227. 3 residues coordinate heme b: histidine 393, arginine 490, and arginine 494.

This sequence belongs to the peroxidase family. Heme b is required as a cofactor. Requires Ca(2+) as cofactor.

The catalysed reaction is hexadecanoate + O2 = (2R)-2-hydroperoxyhexadecanoate. It carries out the reaction dodecanoate + O2 = (2R)-2-hydroperoxydodecanoate. Functionally, alpha-dioxygenase that catalyzes the primary oxygenation step of a variety of 14-20 carbon fatty acids, containing up to three unsaturated bonds, into their corresponding 2R-hydroperoxides. Involved in the production of oxylipins that function in cell signaling, wound healing, and protection from infection. The alpha-oxidation pathway of fatty acids may play a role during plant developmental processes. This chain is Alpha-dioxygenase PIOX, found in Pisum sativum (Garden pea).